The following is a 307-amino-acid chain: ATP-dependent (S)-NAD(P)H-hydrate dehydratase (307 aa).

The 291-residue stretch at 1–291 (MDHFIKLLPK…DEIPKLVRDV (291 aa)) folds into the YjeF C-terminal domain. (6S)-NADPHX-binding positions include Gly96 and 150–156 (NIVEFSR). Residues 194-198 (KGEVD) and 214-223 (SSLRRCGGQG) contribute to the ATP site. Position 224 (Asp224) interacts with (6S)-NADPHX.

This sequence belongs to the NnrD/CARKD family. The cofactor is Mg(2+).

It catalyses the reaction (6S)-NADHX + ATP = ADP + phosphate + NADH + H(+). It carries out the reaction (6S)-NADPHX + ATP = ADP + phosphate + NADPH + H(+). Catalyzes the dehydration of the S-form of NAD(P)HX at the expense of ATP, which is converted to ADP. Together with NAD(P)HX epimerase, which catalyzes the epimerization of the S- and R-forms, the enzyme allows the repair of both epimers of NAD(P)HX, a damaged form of NAD(P)H that is a result of enzymatic or heat-dependent hydration. The polypeptide is ATP-dependent (S)-NAD(P)H-hydrate dehydratase (Caenorhabditis elegans).